The primary structure comprises 357 residues: Elongation factor Ts (357 aa).

Residues 82–85 are involved in Mg(2+) ion dislocation from EF-Tu; sequence TDFV.

It belongs to the EF-Ts family.

It localises to the cytoplasm. Its function is as follows. Associates with the EF-Tu.GDP complex and induces the exchange of GDP to GTP. It remains bound to the aminoacyl-tRNA.EF-Tu.GTP complex up to the GTP hydrolysis stage on the ribosome. The polypeptide is Elongation factor Ts (Campylobacter jejuni subsp. doylei (strain ATCC BAA-1458 / RM4099 / 269.97)).